The chain runs to 1006 residues: MIAQLSTVAPSANYPEFLEALRNSGFRGQISADYATRTVLATDNSIYQRLPQAAVFPLDADDVARVATLMGEPRFQQVKLTPRGGGTGTNGQSLTDGIVVDLSRHMNNILEINVEERWVRVQAGTVKDQLNAALKPHGLFFAPELSTSNRATVGGMINTDASGQGSCTYGKTRDHVLELHSVLLGGERLHSLPIDDAALEQACAAPGRVGEVYRMAREIQETQAELIETTFPKLNRCLTGYDLAHLRDEQGRFNLNSVLCGAEGSLGYVVEAKLNVLPIPKYAVLVNVRYTSFMDALRDANALMAHKPLSIETVDSKVLMLAMKDIVWHSVAEYFPADPERPTLGINLVEFCGDEPAEVNAKVQAFIQHLQSDTSVERLGHTLAEGAEAVTRVYTMRKRSVGLLGNVEGEVRPQPFVEDTAVPPEQLADYIADFRALLDGYGLAYGMFGHVDAGVLHVRPALDMKDPVQAALVKPISDAVAALTKRYGGLLWGEHGKGLRSEYVPEYFGELYPALQRLKGAFDPHNQLNPGKICTPLGSAEGLTPVDGVTLRGDLDRTIDERVWQDFPSAVHCNGNGACYNYDPNDAMCPSWKATRERQHSPKGRASLMREWLRLQGEANIDVLAAARNKVSWLKGLPARLRNNRARNQGQEDFSHEVYDAMAGCLACKSCAGQCPIKVNVPDFRSRFLELYHGRYQRPLRDYLIGSLEFTIPYLAHAPGLYNAVMGSKWVSQLLADKVGMVDSPLISRFNFQATLTRCRVGMATVPALRELTPAQRERSIVLVQDAFTRYFETPLLSAFIDLAHRLGHRVFLAPYSANGKPLHVQGFLGAFAKAAIRNATQLKALADCGVPLVGLDPAMTLVYRQEYQKVPGLEGCPKVLLPQEWLMDVLPEQAPAAPGSFRLMAHCTEKTNVPASTRQWEQVFARLGLKLVTEATGCCGMSGTYGHEARNQETSRTIFEQSWATKLDKDGEPLATGYSCRSQVKRMTERKMRHPLEVVLQYAQR.

In terms of domain architecture, FAD-binding PCMH-type spans 47 to 279; it reads YQRLPQAAVF…VEAKLNVLPI (233 aa). Positions 397 and 495 each coordinate (R)-2-hydroxyglutarate. The region spanning 655–687 is the 4Fe-4S ferredoxin-type domain; the sequence is SHEVYDAMAGCLACKSCAGQCPIKVNVPDFRSR. Residues C665, C668, C671, and C675 each contribute to the [4Fe-4S] cluster site.

The protein in the N-terminal section; belongs to the FAD-binding oxidoreductase/transferase type 4 family. It depends on [4Fe-4S] cluster as a cofactor. The cofactor is FAD.

The catalysed reaction is (R)-2-hydroxyglutarate + A = 2-oxoglutarate + AH2. The protein operates within amino-acid degradation. Its function is as follows. Catalyzes the oxidation of D-2-hydroxyglutarate (D-2-HGA) to 2-oxoglutarate. Is involved in a D-lysine catabolic pathway. The sequence is that of D-2-hydroxyglutarate dehydrogenase from Pseudomonas putida (strain ATCC 47054 / DSM 6125 / CFBP 8728 / NCIMB 11950 / KT2440).